The chain runs to 303 residues: Phosphatidylglycerol--prolipoprotein diacylglyceryl transferase (303 aa).

3 helical membrane-spanning segments follow: residues V18–L38, L58–E78, and W107–F127. R154 serves as a coordination point for a 1,2-diacyl-sn-glycero-3-phospho-(1'-sn-glycerol). The next 2 helical transmembrane spans lie at P193 to I213 and I266 to Y286.

This sequence belongs to the Lgt family.

The protein resides in the cell inner membrane. The catalysed reaction is L-cysteinyl-[prolipoprotein] + a 1,2-diacyl-sn-glycero-3-phospho-(1'-sn-glycerol) = an S-1,2-diacyl-sn-glyceryl-L-cysteinyl-[prolipoprotein] + sn-glycerol 1-phosphate + H(+). It functions in the pathway protein modification; lipoprotein biosynthesis (diacylglyceryl transfer). Catalyzes the transfer of the diacylglyceryl group from phosphatidylglycerol to the sulfhydryl group of the N-terminal cysteine of a prolipoprotein, the first step in the formation of mature lipoproteins. The polypeptide is Phosphatidylglycerol--prolipoprotein diacylglyceryl transferase (Prochlorococcus marinus (strain MIT 9211)).